The sequence spans 127 residues: Large-conductance mechanosensitive channel (127 aa).

3 helical membrane passes run 19 to 39 (VGVI…TNII), 42 to 62 (LLGI…VGSA), and 67 to 87 (GAFI…FLLI).

This sequence belongs to the MscL family. In terms of assembly, homopentamer.

The protein resides in the cell membrane. Its function is as follows. Channel that opens in response to stretch forces in the membrane lipid bilayer. May participate in the regulation of osmotic pressure changes within the cell. This Levilactobacillus brevis (strain ATCC 367 / BCRC 12310 / CIP 105137 / JCM 1170 / LMG 11437 / NCIMB 947 / NCTC 947) (Lactobacillus brevis) protein is Large-conductance mechanosensitive channel.